The sequence spans 640 residues: SH3 domain-containing protein 21 (640 aa).

A disordered region spans residues 1 to 60 (MVQSELQLQPRAGGRAEAASWGDRGNDKGGLGNPDMPSVSPGPQRPPKLSSLAYDSPPDY). The region spanning 65 to 126 (SHPEVYRVLF…PDNFVLPPPP (62 aa)) is the SH3 domain. Disordered stretches follow at residues 133–361 (RKVV…PLGD), 401–551 (YFVA…PDSQ), and 618–640 (VQVM…TQTY). A compositionally biased stretch (basic and acidic residues) spans 177-186 (PSRDSQKLTS). A compositionally biased stretch (polar residues) spans 210–220 (TQTPQQRSVSS). Composition is skewed to basic and acidic residues over residues 401–416 (YFVA…EAHT), 459–469 (ALEKPHPHEEA), and 494–532 (RPLR…EVPP). Positions 572 to 626 (VDVTSLRGEVESLRRALELMEVQLERKLTDIWEELKSEKEQRRRLEVQVMQGTQK) form a coiled coil. Over residues 621–640 (MQGTQKSQTPRVIHTQTQTY) the composition is skewed to polar residues.

This is SH3 domain-containing protein 21 (SH3D21) from Homo sapiens (Human).